The sequence spans 369 residues: Anhydro-N-acetylmuramic acid kinase (369 aa).

Residue 12–19 participates in ATP binding; it reads GTSLDGVD.

The protein belongs to the anhydro-N-acetylmuramic acid kinase family.

The catalysed reaction is 1,6-anhydro-N-acetyl-beta-muramate + ATP + H2O = N-acetyl-D-muramate 6-phosphate + ADP + H(+). It functions in the pathway amino-sugar metabolism; 1,6-anhydro-N-acetylmuramate degradation. The protein operates within cell wall biogenesis; peptidoglycan recycling. Its function is as follows. Catalyzes the specific phosphorylation of 1,6-anhydro-N-acetylmuramic acid (anhMurNAc) with the simultaneous cleavage of the 1,6-anhydro ring, generating MurNAc-6-P. Is required for the utilization of anhMurNAc either imported from the medium or derived from its own cell wall murein, and thus plays a role in cell wall recycling. This Escherichia coli (strain SE11) protein is Anhydro-N-acetylmuramic acid kinase.